The primary structure comprises 60 residues: Hemocyte defensin Cg-Defh1 (60 aa).

Residues 1–17 form the signal peptide; sequence LFTLVVLLMVSADMAFA. Beta-D-GlcNAc-(1-&gt;4)-Mur2Ac(oyl-L-Ala-gamma-D-Glu-L-Lys-D-Ala-D-Ala)-di-trans,octa-cis-undecaprenyl diphosphate-binding residues include phenylalanine 19, glycine 20, and cysteine 21. 4 cysteine pairs are disulfide-bonded: cysteine 21–cysteine 42, cysteine 28–cysteine 51, cysteine 32–cysteine 53, and cysteine 37–cysteine 56. The interval 22 to 25 is binds to membrane interface; that stretch reads PRDQ. Histidine 31 contacts beta-D-GlcNAc-(1-&gt;4)-Mur2Ac(oyl-L-Ala-gamma-D-Glu-L-Lys-D-Ala-D-Ala)-di-trans,octa-cis-undecaprenyl diphosphate. The segment at 43-49 is binds to membrane interface; that stretch reads DAVTLWL. Cysteine 51 provides a ligand contact to beta-D-GlcNAc-(1-&gt;4)-Mur2Ac(oyl-L-Ala-gamma-D-Glu-L-Lys-D-Ala-D-Ala)-di-trans,octa-cis-undecaprenyl diphosphate.

This sequence belongs to the invertebrate defensin family. Expressed in hemocytes.

The protein resides in the secreted. The protein localises to the target cell membrane. In terms of biological role, antibacterial peptide mostly active against Gram-positive bacteria. It acts by selectively inhibiting peptidoglycan biosynthesis through complex formation with the cell wall precursor lipid II (1:1 molar ratio) thus inhibiting cell wall synthesis. It does not disrupt cell membranes. Is noticeably less potent than Cg-Defh2 and Cg-Defm. Shows no or limited activities against Gram-negative bacteria. The sequence is that of Hemocyte defensin Cg-Defh1 from Magallana gigas (Pacific oyster).